The primary structure comprises 61 residues: Probable tautomerase SAV1363 (61 aa).

P2 acts as the Proton acceptor; via imino nitrogen in catalysis.

It belongs to the 4-oxalocrotonate tautomerase family.

The polypeptide is Probable tautomerase SAV1363 (Staphylococcus aureus (strain Mu50 / ATCC 700699)).